The sequence spans 93 residues: Small ribosomal subunit protein uS19 (93 aa).

It belongs to the universal ribosomal protein uS19 family.

Its function is as follows. Protein S19 forms a complex with S13 that binds strongly to the 16S ribosomal RNA. This is Small ribosomal subunit protein uS19 from Nitratidesulfovibrio vulgaris (strain DSM 19637 / Miyazaki F) (Desulfovibrio vulgaris).